The primary structure comprises 399 residues: Transaminase BacF (399 aa).

Pyridoxal 5'-phosphate-binding positions include 103 to 104, tyrosine 128, asparagine 178, tyrosine 209, and 236 to 238; these read GK and SFS. An N6-(pyridoxal phosphate)lysine modification is found at lysine 239. Arginine 247 contributes to the pyridoxal 5'-phosphate binding site.

It belongs to the class-I pyridoxal-phosphate-dependent aminotransferase family. As to quaternary structure, homodimer. The cofactor is pyridoxal 5'-phosphate.

The protein localises to the cytoplasm. It functions in the pathway antibiotic biosynthesis; bacilysin biosynthesis. Its function is as follows. Part of the bacABCDEF operon responsible for the biosynthesis of the nonribosomally synthesized dipeptide antibiotic bacilysin, composed of L-alanine and L-anticapsin. Bacilysin is an irreversible inactivator of the glutaminase domain of glucosamine synthetase. Catalyzes the reductive amination of the C2 ketone of tetrahydro-hydroxyphenylpyruvate (H4HPP), with L-Phe as an amino donor, to yield tetrahydrotyrosine (H4Tyr) diastereomer. D-Phe is not an effective amino donor. BacF associated to BacG converts 3E,7R- and 3Z,7R-ex-H2HPP to 2S,4R,7R- and 2S,4S,7R-H4Tyr, respectively. Given that bacilysin has the 2S,4S stereochemistry in its anticapsin moiety, it is likely that the 2S,4S-H4Tyr is the diastereomer used for the biosynthesis. This Bacillus subtilis (strain 168) protein is Transaminase BacF.